Consider the following 641-residue polypeptide: Threonine--tRNA ligase (641 aa).

One can recognise a TGS domain in the interval 1 to 61 (MPAITLPDGS…DDDVQLEIVT (61 aa)). A catalytic region spans residues 242–533 (DHRRIGRAQN…LIEHYAGALP (292 aa)). The Zn(2+) site is built by cysteine 333, histidine 384, and histidine 510.

Belongs to the class-II aminoacyl-tRNA synthetase family. In terms of assembly, homodimer. Requires Zn(2+) as cofactor.

The protein resides in the cytoplasm. The catalysed reaction is tRNA(Thr) + L-threonine + ATP = L-threonyl-tRNA(Thr) + AMP + diphosphate + H(+). In terms of biological role, catalyzes the attachment of threonine to tRNA(Thr) in a two-step reaction: L-threonine is first activated by ATP to form Thr-AMP and then transferred to the acceptor end of tRNA(Thr). Also edits incorrectly charged L-seryl-tRNA(Thr). The chain is Threonine--tRNA ligase from Alkalilimnicola ehrlichii (strain ATCC BAA-1101 / DSM 17681 / MLHE-1).